The primary structure comprises 177 residues: Putative HVA22-like protein g (177 aa).

Residues 145–165 are disordered; sequence QSTPKSKAEEKKETTIPKLDD. A compositionally biased stretch (basic and acidic residues) spans 150-165; it reads SKAEEKKETTIPKLDD.

Belongs to the DP1 family.

The chain is Putative HVA22-like protein g (HVA22G) from Arabidopsis thaliana (Mouse-ear cress).